The chain runs to 271 residues: Urease accessory protein UreD (271 aa).

This sequence belongs to the UreD family. In terms of assembly, ureD, UreF and UreG form a complex that acts as a GTP-hydrolysis-dependent molecular chaperone, activating the urease apoprotein by helping to assemble the nickel containing metallocenter of UreC. The UreE protein probably delivers the nickel.

Its subcellular location is the cytoplasm. Required for maturation of urease via the functional incorporation of the urease nickel metallocenter. This Haemophilus influenzae (strain 86-028NP) protein is Urease accessory protein UreD.